Consider the following 123-residue polypeptide: Small ribosomal subunit protein uS13 (123 aa).

The disordered stretch occupies residues 97–123; the sequence is PCRGQRTHTNSRTRKGPRRGVMAKKKK.

It belongs to the universal ribosomal protein uS13 family. Part of the 30S ribosomal subunit. Forms a loose heterodimer with protein S19. Forms two bridges to the 50S subunit in the 70S ribosome.

In terms of biological role, located at the top of the head of the 30S subunit, it contacts several helices of the 16S rRNA. In the 70S ribosome it contacts the 23S rRNA (bridge B1a) and protein L5 of the 50S subunit (bridge B1b), connecting the 2 subunits; these bridges are implicated in subunit movement. Contacts the tRNAs in the A and P-sites. This is Small ribosomal subunit protein uS13 from Solidesulfovibrio magneticus (strain ATCC 700980 / DSM 13731 / RS-1) (Desulfovibrio magneticus).